We begin with the raw amino-acid sequence, 177 residues long: NAD(P)H-quinone oxidoreductase subunit 6, chloroplastic (177 aa).

5 helical membrane passes run 10–30 (ILLV…VLLT), 32–52 (PIYS…FHIL), 61–81 (AQLL…VMFM), 93–115 (WTVG…IATI), and 152–172 (FFLP…GAIA).

It belongs to the complex I subunit 6 family. NDH is composed of at least 16 different subunits, 5 of which are encoded in the nucleus.

The protein resides in the plastid. It localises to the chloroplast thylakoid membrane. The catalysed reaction is a plastoquinone + NADH + (n+1) H(+)(in) = a plastoquinol + NAD(+) + n H(+)(out). It catalyses the reaction a plastoquinone + NADPH + (n+1) H(+)(in) = a plastoquinol + NADP(+) + n H(+)(out). NDH shuttles electrons from NAD(P)H:plastoquinone, via FMN and iron-sulfur (Fe-S) centers, to quinones in the photosynthetic chain and possibly in a chloroplast respiratory chain. The immediate electron acceptor for the enzyme in this species is believed to be plastoquinone. Couples the redox reaction to proton translocation, and thus conserves the redox energy in a proton gradient. This Amborella trichopoda protein is NAD(P)H-quinone oxidoreductase subunit 6, chloroplastic (ndhG).